The sequence spans 128 residues: Large ribosomal subunit protein bL17 (128 aa).

The protein belongs to the bacterial ribosomal protein bL17 family. In terms of assembly, part of the 50S ribosomal subunit. Contacts protein L32.

The sequence is that of Large ribosomal subunit protein bL17 from Tolumonas auensis (strain DSM 9187 / NBRC 110442 / TA 4).